The chain runs to 89 residues: Small ribosomal subunit protein uS17 (89 aa).

This sequence belongs to the universal ribosomal protein uS17 family. Part of the 30S ribosomal subunit.

Functionally, one of the primary rRNA binding proteins, it binds specifically to the 5'-end of 16S ribosomal RNA. The polypeptide is Small ribosomal subunit protein uS17 (Coxiella burnetii (strain RSA 331 / Henzerling II)).